The primary structure comprises 154 residues: Ribonuclease H (154 aa).

One can recognise an RNase H type-1 domain in the interval 1-142 (MEKTVEIYTD…VDDLARDAAG (142 aa)). Mg(2+) is bound by residues Asp10, Glu48, Asp70, and Asp134.

This sequence belongs to the RNase H family. In terms of assembly, monomer. Mg(2+) is required as a cofactor.

It localises to the cytoplasm. The enzyme catalyses Endonucleolytic cleavage to 5'-phosphomonoester.. Functionally, endonuclease that specifically degrades the RNA of RNA-DNA hybrids. This chain is Ribonuclease H, found in Pseudoalteromonas translucida (strain TAC 125).